The following is an 828-amino-acid chain: Protein TAPT1 homolog (828 aa).

3 stretches are compositionally biased toward low complexity: residues 67 to 83 (NNNNNNNSNNVSSGNHI), 212 to 233 (QQTQPQPQPQTQTTQQPSSQQP), and 302 to 321 (SNNNDNNDNNNNNNSKNNNN). 3 disordered regions span residues 67 to 92 (NNNNNNNSNNVSSGNHITNSNSNSSG), 212 to 236 (QQTQPQPQPQTQTTQQPSSQQPFSY), and 297 to 346 (QTTP…TSSI). Helical transmembrane passes span 428–448 (ISFGFLVCFDSFLFLFTFLPI), 472–492 (QIFDLFRGFIWVTCFVFLNFI), 562–582 (ILGPFTHLLVATGYVCLHSLV), 722–742 (SSWGVNNIIGFVPFPLASIVV), and 754–774 (IFGIFLMVQIYICLVLLKIFI). Residues 797 to 822 (LSSSSSSSSSNSLNTTSTTSTSTSTT) show a composition bias toward low complexity. The tract at residues 797-828 (LSSSSSSSSSNSLNTTSTTSTSTSTTNDKKNN) is disordered.

The protein belongs to the TAPT1 family.

It is found in the membrane. The chain is Protein TAPT1 homolog from Dictyostelium discoideum (Social amoeba).